Reading from the N-terminus, the 61-residue chain is Large ribosomal subunit protein uL30 (61 aa).

It belongs to the universal ribosomal protein uL30 family. In terms of assembly, part of the 50S ribosomal subunit.

This is Large ribosomal subunit protein uL30 from Chlorobaculum tepidum (strain ATCC 49652 / DSM 12025 / NBRC 103806 / TLS) (Chlorobium tepidum).